The chain runs to 404 residues: High affinity immunoglobulin gamma Fc receptor I (404 aa).

A signal peptide spans 1–24 (MILTSFGDDMWLLTTLLLWVPVGG). At 25–297 (EVVNATKAVI…QVLGPQSSAP (273 aa)) the chain is on the extracellular side. N-linked (GlcNAc...) asparagine glycosylation is found at Asn-28, Asn-48, Asn-69, Asn-168, and Asn-249. 3 Ig-like C2-type domains span residues 32–111 (AVIT…LQIH), 117–194 (LQAS…SITV), and 201–286 (PVLR…PELE). 3 disulfide bridges follow: Cys-53-Cys-95, Cys-134-Cys-177, and Cys-221-Cys-269. A helical transmembrane segment spans residues 298 to 320 (VWFHILFYLSVGIMFSLNTVLYV). The tract at residues 321–342 (KIHRLQREKKYNLEVPLVSEQG) is interaction with EPB41L2. Over 321–404 (KIHRLQREKK…DSTGAQTSQS (84 aa)) the chain is Cytoplasmic. The tract at residues 346 to 404 (NSFQQVRSDGVYEEVTATASQTTPKEAPDGPRSSVGDCGPEQPEPLPPSDSTGAQTSQS) is disordered. The residue at position 347 (Ser-347) is a Phosphoserine. Thr-368 carries the post-translational modification Phosphothreonine. Over residues 394-404 (SDSTGAQTSQS) the composition is skewed to polar residues.

This sequence belongs to the immunoglobulin superfamily. FCGR1 family. Interacts with FCERG1; forms a functional signaling complex. Interacts with FLNA; prevents FCGR1A degradation. Interacts with EPB41L2, LAT and PPL. Interacts with HCK and LYN. In terms of processing, N-glycosylated. Post-translationally, phosphorylated on serine residues. In terms of tissue distribution, macrophage-specific.

It is found in the cell membrane. In terms of biological role, high affinity receptor for the Fc region of immunoglobulins gamma. Functions in both innate and adaptive immune responses. This is High affinity immunoglobulin gamma Fc receptor I (Fcgr1) from Mus musculus (Mouse).